A 180-amino-acid polypeptide reads, in one-letter code: Large ribosomal subunit protein uL6 (180 aa).

Belongs to the universal ribosomal protein uL6 family. As to quaternary structure, part of the 50S ribosomal subunit.

Its function is as follows. This protein binds to the 23S rRNA, and is important in its secondary structure. It is located near the subunit interface in the base of the L7/L12 stalk, and near the tRNA binding site of the peptidyltransferase center. The polypeptide is Large ribosomal subunit protein uL6 (Mycoplasma capricolum subsp. capricolum (strain California kid / ATCC 27343 / NCTC 10154)).